Reading from the N-terminus, the 165-residue chain is Putative BTB/POZ domain-containing protein At2g40440 (165 aa).

Positions 24–98 (VDVRLKAGDS…IYSDGSMLSA (75 aa)) constitute a BTB domain.

The protein operates within protein modification; protein ubiquitination. In terms of biological role, may act as a substrate-specific adapter of an E3 ubiquitin-protein ligase complex (CUL3-RBX1-BTB) which mediates the ubiquitination and subsequent proteasomal degradation of target proteins. The chain is Putative BTB/POZ domain-containing protein At2g40440 from Arabidopsis thaliana (Mouse-ear cress).